The following is a 323-amino-acid chain: Putative ABC transporter substrate-binding lipoprotein YhfQ (323 aa).

The N-terminal stretch at 1 to 19 is a signal peptide; that stretch reads MKKTLIILTVLLLSVLTAA. Cys20 carries the N-palmitoyl cysteine lipid modification. Residue Cys20 is the site of S-diacylglycerol cysteine attachment. Positions 51-322 constitute a Fe/B12 periplasmic-binding domain; sequence RVVVLELGFI…ELQKEMPAAK (272 aa).

Belongs to the bacterial solute-binding protein 8 family. In terms of assembly, interacts with FloT.

It is found in the cell membrane. It localises to the membrane raft. The protein is Putative ABC transporter substrate-binding lipoprotein YhfQ (yhfQ) of Bacillus subtilis (strain 168).